The chain runs to 105 residues: Small ribosomal subunit protein eS24 (105 aa).

The disordered stretch occupies residues 85–105; the sequence is SVIAKNEEPEEEPEEEAEDAE. The span at 92–105 shows a compositional bias: acidic residues; sequence EPEEEPEEEAEDAE.

This sequence belongs to the eukaryotic ribosomal protein eS24 family.

This Methanosphaera stadtmanae (strain ATCC 43021 / DSM 3091 / JCM 11832 / MCB-3) protein is Small ribosomal subunit protein eS24.